A 281-amino-acid chain; its full sequence is NADPH-dependent 7-cyano-7-deazaguanine reductase (281 aa).

Residue Ile88 to Ser90 coordinates substrate. Ser90–Lys91 contributes to the NADPH binding site. Cys189 functions as the Thioimide intermediate in the catalytic mechanism. Asp196 (proton donor) is an active-site residue. His228–Glu229 lines the substrate pocket. Residue Arg257–Gly258 coordinates NADPH.

It belongs to the GTP cyclohydrolase I family. QueF type 2 subfamily. Homodimer.

The protein resides in the cytoplasm. It catalyses the reaction 7-aminomethyl-7-carbaguanine + 2 NADP(+) = 7-cyano-7-deazaguanine + 2 NADPH + 3 H(+). Its pathway is tRNA modification; tRNA-queuosine biosynthesis. Catalyzes the NADPH-dependent reduction of 7-cyano-7-deazaguanine (preQ0) to 7-aminomethyl-7-deazaguanine (preQ1). In Proteus mirabilis (strain HI4320), this protein is NADPH-dependent 7-cyano-7-deazaguanine reductase.